The primary structure comprises 547 residues: CTP synthase (547 aa).

The interval 1 to 265 (MARYIFITGG…DQAVLDAFDI (265 aa)) is amidoligase domain. Ser-13 lines the CTP pocket. Ser-13 contributes to the UTP binding site. ATP-binding positions include 14–19 (SLGKGL) and Asp-71. Positions 71 and 139 each coordinate Mg(2+). CTP contacts are provided by residues 146–148 (DIE), 186–191 (KTKPTQ), and Lys-222. UTP-binding positions include 186-191 (KTKPTQ) and Lys-222. The Glutamine amidotransferase type-1 domain maps to 291-546 (KVAIVGKYTQ…IRAAKENSRL (256 aa)). Gly-353 is an L-glutamine binding site. Cys-380 (nucleophile; for glutamine hydrolysis) is an active-site residue. L-glutamine-binding positions include 381–384 (LGMQ), Glu-404, and Arg-474. Catalysis depends on residues His-519 and Glu-521.

It belongs to the CTP synthase family. Homotetramer.

It catalyses the reaction UTP + L-glutamine + ATP + H2O = CTP + L-glutamate + ADP + phosphate + 2 H(+). It carries out the reaction L-glutamine + H2O = L-glutamate + NH4(+). The enzyme catalyses UTP + NH4(+) + ATP = CTP + ADP + phosphate + 2 H(+). The protein operates within pyrimidine metabolism; CTP biosynthesis via de novo pathway; CTP from UDP: step 2/2. Allosterically activated by GTP, when glutamine is the substrate; GTP has no effect on the reaction when ammonia is the substrate. The allosteric effector GTP functions by stabilizing the protein conformation that binds the tetrahedral intermediate(s) formed during glutamine hydrolysis. Inhibited by the product CTP, via allosteric rather than competitive inhibition. In terms of biological role, catalyzes the ATP-dependent amination of UTP to CTP with either L-glutamine or ammonia as the source of nitrogen. Regulates intracellular CTP levels through interactions with the four ribonucleotide triphosphates. The sequence is that of CTP synthase from Roseobacter denitrificans (strain ATCC 33942 / OCh 114) (Erythrobacter sp. (strain OCh 114)).